The sequence spans 559 residues: Glucans biosynthesis protein G (559 aa).

The signal sequence occupies residues 1 to 37 (MVSLLSCGTSASSHIVKKALTRLSLAMAAGLCFNLAA).

The protein belongs to the OpgD/OpgG family.

The protein resides in the periplasm. The protein operates within glycan metabolism; osmoregulated periplasmic glucan (OPG) biosynthesis. Involved in the biosynthesis of osmoregulated periplasmic glucans (OPGs). In Shewanella frigidimarina (strain NCIMB 400), this protein is Glucans biosynthesis protein G.